Reading from the N-terminus, the 370-residue chain is uncharacterized protein (370 aa).

Methionine 1 is modified (N-acetylmethionine).

It belongs to the ornithine cyclodeaminase/mu-crystallin family.

This is an uncharacterized protein from Saccharomyces cerevisiae (strain ATCC 204508 / S288c) (Baker's yeast).